The primary structure comprises 257 residues: UPF0246 protein Mmc1_3117 (257 aa).

Belongs to the UPF0246 family.

In Magnetococcus marinus (strain ATCC BAA-1437 / JCM 17883 / MC-1), this protein is UPF0246 protein Mmc1_3117.